Reading from the N-terminus, the 64-residue chain is Large ribosomal subunit protein uL30 (64 aa).

Belongs to the universal ribosomal protein uL30 family. In terms of assembly, part of the 50S ribosomal subunit.

In Beijerinckia indica subsp. indica (strain ATCC 9039 / DSM 1715 / NCIMB 8712), this protein is Large ribosomal subunit protein uL30.